The primary structure comprises 588 residues: Lysine--tRNA ligase (588 aa).

A compositionally biased stretch (polar residues) spans 1 to 10 (MDSSVSTEPL). The disordered stretch occupies residues 1-54 (MDSSVSTEPLSKNALKREKKAKEKEQLEQEKKAAAVAKRQMEQHNLPENDDLDP). Over residues 20 to 47 (KAKEKEQLEQEKKAAAVAKRQMEQHNLP) the composition is skewed to basic and acidic residues.

Belongs to the class-II aminoacyl-tRNA synthetase family.

Its subcellular location is the cytoplasm. The catalysed reaction is tRNA(Lys) + L-lysine + ATP = L-lysyl-tRNA(Lys) + AMP + diphosphate. The chain is Lysine--tRNA ligase (LYSRS) from Solanum lycopersicum (Tomato).